The chain runs to 1343 residues: DNA-directed RNA polymerase subunit beta (1343 aa).

The protein belongs to the RNA polymerase beta chain family. As to quaternary structure, the RNAP catalytic core consists of 2 alpha, 1 beta, 1 beta' and 1 omega subunit. When a sigma factor is associated with the core the holoenzyme is formed, which can initiate transcription.

The enzyme catalyses RNA(n) + a ribonucleoside 5'-triphosphate = RNA(n+1) + diphosphate. DNA-dependent RNA polymerase catalyzes the transcription of DNA into RNA using the four ribonucleoside triphosphates as substrates. This Haemophilus influenzae (strain ATCC 51907 / DSM 11121 / KW20 / Rd) protein is DNA-directed RNA polymerase subunit beta.